Here is a 446-residue protein sequence, read N- to C-terminus: Coiled-coil domain-containing protein 112 (446 aa).

Coiled-coil stretches lie at residues 23–116 and 219–400; these read LEEL…RKID and ERKK…NVSR. 2 disordered regions span residues 247-277 and 394-430; these read NNTP…AVEA and VENN…LLHI. A compositionally biased stretch (basic and acidic residues) spans 255–268; it reads NKPEDNQKQKEEQR.

The protein resides in the cytoplasm. It is found in the cytoskeleton. Its subcellular location is the microtubule organizing center. The protein localises to the centrosome. It localises to the centriolar satellite. This Macaca fascicularis (Crab-eating macaque) protein is Coiled-coil domain-containing protein 112 (CCDC112).